The chain runs to 155 residues: Small ribosomal subunit protein uS7c (155 aa).

It belongs to the universal ribosomal protein uS7 family. In terms of assembly, part of the 30S ribosomal subunit.

Its subcellular location is the plastid. Functionally, one of the primary rRNA binding proteins, it binds directly to 16S rRNA where it nucleates assembly of the head domain of the 30S subunit. The polypeptide is Small ribosomal subunit protein uS7c (rps7) (Lathraea clandestina (Purple toothwort)).